Consider the following 392-residue polypeptide: S-adenosylmethionine synthase (392 aa).

Mg(2+) is bound at residue glutamate 10. Residue histidine 16 coordinates ATP. Glutamate 44 serves as a coordination point for K(+). L-methionine-binding residues include glutamate 57 and glutamine 100. ATP contacts are provided by residues 168–170 (DGK), 236–239 (SGRF), aspartate 247, 253–254 (RK), alanine 270, lysine 274, and lysine 278. Aspartate 247 contacts L-methionine. Residue lysine 278 participates in L-methionine binding.

This sequence belongs to the AdoMet synthase family. In terms of assembly, homotetramer. The cofactor is Mn(2+). Requires Mg(2+) as cofactor. Co(2+) is required as a cofactor. K(+) serves as cofactor.

It is found in the cytoplasm. It catalyses the reaction L-methionine + ATP + H2O = S-adenosyl-L-methionine + phosphate + diphosphate. It participates in amino-acid biosynthesis; S-adenosyl-L-methionine biosynthesis; S-adenosyl-L-methionine from L-methionine: step 1/1. Catalyzes the formation of S-adenosylmethionine from methionine and ATP. The reaction comprises two steps that are both catalyzed by the same enzyme: formation of S-adenosylmethionine (AdoMet) and triphosphate, and subsequent hydrolysis of the triphosphate. The polypeptide is S-adenosylmethionine synthase (SAMS) (Phaseolus lunatus (Lima bean)).